Consider the following 96-residue polypeptide: Protein RSI-1 (96 aa).

Positions Met1–Gly29 are cleaved as a signal peptide.

It belongs to the GASA family. Post-translationally, six disulfide bonds may be present. As to expression, expressed very early in lateral root development.

It is found in the secreted. This chain is Protein RSI-1 (RSI-1), found in Solanum lycopersicum (Tomato).